The primary structure comprises 263 residues: Type-2Bb cytolytic delta-endotoxin (263 aa).

This sequence belongs to the cyt1/cyt2 endotoxin family. Post-translationally, active after proteolytic processing.

Kills the larvae of dipteran insects by making pores in the epithelial cell membrane of the insect midgut. In Bacillus thuringiensis subsp. jegathesan, this protein is Type-2Bb cytolytic delta-endotoxin (cyt2Bb1).